The chain runs to 236 residues: Biosynthetic peptidoglycan transglycosylase (236 aa).

A helical transmembrane segment spans residues 20-40; it reads LVFIVLSVLILPYALIGLYLL.

Belongs to the glycosyltransferase 51 family.

The protein resides in the cell inner membrane. The catalysed reaction is [GlcNAc-(1-&gt;4)-Mur2Ac(oyl-L-Ala-gamma-D-Glu-L-Lys-D-Ala-D-Ala)](n)-di-trans,octa-cis-undecaprenyl diphosphate + beta-D-GlcNAc-(1-&gt;4)-Mur2Ac(oyl-L-Ala-gamma-D-Glu-L-Lys-D-Ala-D-Ala)-di-trans,octa-cis-undecaprenyl diphosphate = [GlcNAc-(1-&gt;4)-Mur2Ac(oyl-L-Ala-gamma-D-Glu-L-Lys-D-Ala-D-Ala)](n+1)-di-trans,octa-cis-undecaprenyl diphosphate + di-trans,octa-cis-undecaprenyl diphosphate + H(+). It functions in the pathway cell wall biogenesis; peptidoglycan biosynthesis. Its function is as follows. Peptidoglycan polymerase that catalyzes glycan chain elongation from lipid-linked precursors. This is Biosynthetic peptidoglycan transglycosylase from Rhizobium meliloti (strain 1021) (Ensifer meliloti).